Reading from the N-terminus, the 180-residue chain is UPF0227 protein VV2369 (180 aa).

Belongs to the UPF0227 family.

This chain is UPF0227 protein VV2369, found in Vibrio vulnificus (strain YJ016).